The following is a 157-amino-acid chain: Urease accessory protein UreE (157 aa).

This sequence belongs to the UreE family.

The protein resides in the cytoplasm. Involved in urease metallocenter assembly. Binds nickel. Probably functions as a nickel donor during metallocenter assembly. The protein is Urease accessory protein UreE of Corynebacterium glutamicum (strain R).